Here is a 48-residue protein sequence, read N- to C-terminus: uncharacterized protein (48 aa).

Belongs to the ELIP/psbS family.

It localises to the plastid. The protein localises to the chloroplast. Functionally, possible role in chlorophyll and/or carotenoid binding. This is an uncharacterized protein from Pyropia yezoensis (Susabi-nori).